The primary structure comprises 118 residues: Non-specific lipid-transfer protein A (118 aa).

A signal peptide spans M1–R25. 4 disulfide bridges follow: C29–C76, C39–C53, C54–C100, and C74–C114.

Belongs to the plant LTP family.

Functionally, plant non-specific lipid-transfer proteins transfer phospholipids as well as galactolipids across membranes. May play a role in wax or cutin deposition in the cell walls of expanding epidermal cells and certain secretory tissues. This Brassica oleracea var. italica (Broccoli) protein is Non-specific lipid-transfer protein A (WAX9A).